The primary structure comprises 1569 residues: Zinc finger protein GLI3 (1569 aa).

Composition is skewed to polar residues over residues 1–10 (MEAQSRSTTA) and 416–432 (AAQQNKPTSESAVSSTG). Disordered regions lie at residues 1–79 (MEAQ…STSS) and 414–461 (SEAA…DQPD). 5 consecutive C2H2-type zinc fingers follow at residues 485 to 510 (TNCHWEGCSREFDTQEQLVHHINNDH), 518 to 545 (FVCRWLDCSREQKPFKAQYMLVVHMRRH), 551 to 575 (HKCTFEGCSKAYSRLENLKTHLRSH), 581 to 606 (YVCEHEGCNKAFSNASDRAKHQNRTH), and 612 to 637 (YVCKIPGCTKRYTDPSSLRKHVKTVH). Disordered regions lie at residues 625–731 (DPSS…YTNS), 899–921 (SYDPISTDASRRSSETSQCDGLP), 1202–1228 (PKSGLSQQRGYQHHTQNNPQAPQQNLD), and 1335–1364 (SNQTTSGQNGNTTDGTRSFLSTTQNGGEQQ). Residues 637 to 653 (HGPEAHVTKKQRGDIHP) show a composition bias toward basic and acidic residues. The segment covering 663-676 (SHSQSRSPGQQTQG) has biased composition (polar residues). The span at 678–704 (HGEHKDLSNTTSKHEECLQVRSVKTEK) shows a compositional bias: basic and acidic residues. Polar residues predominate over residues 705 to 731 (PMSSQPSPGGKSSCSRQQSPISNYTNS). The span at 1335–1350 (SNQTTSGQNGNTTDGT) shows a compositional bias: low complexity. The segment covering 1352 to 1364 (SFLSTTQNGGEQQ) has biased composition (polar residues).

Belongs to the GLI C2H2-type zinc-finger protein family. Post-translationally, phosphorylation is essential for its proteolytic processing. The repressor form (GLI3R), a C-terminally truncated form is generated from the full-length GLI3 protein (GLI3FL) through proteolytic processing.

The protein localises to the nucleus. It is found in the cytoplasm. Its function is as follows. Has a dual function as a transcriptional activator and a repressor of the sonic hedgehog (Shh) pathway, and may play a role in limb development. May bind to the minimal GLI-consensus sequence 5'-GGGTGGTC-3'. Has an essential role in the early embryonic patterning of mesoderm and neuroectoderm. This is Zinc finger protein GLI3 (gli3) from Xenopus laevis (African clawed frog).